Consider the following 198-residue polypeptide: GTP cyclohydrolase-2 (198 aa).

49 to 53 (RVHSE) is a GTP binding site. Residues cysteine 54, cysteine 65, and cysteine 67 each contribute to the Zn(2+) site. GTP is bound by residues glutamine 70, 92-94 (EGR), and threonine 114. Catalysis depends on aspartate 126, which acts as the Proton acceptor. The Nucleophile role is filled by arginine 128. 2 residues coordinate GTP: threonine 149 and lysine 154.

This sequence belongs to the GTP cyclohydrolase II family. As to quaternary structure, homodimer. The cofactor is Zn(2+).

The catalysed reaction is GTP + 4 H2O = 2,5-diamino-6-hydroxy-4-(5-phosphoribosylamino)-pyrimidine + formate + 2 phosphate + 3 H(+). Its pathway is cofactor biosynthesis; riboflavin biosynthesis; 5-amino-6-(D-ribitylamino)uracil from GTP: step 1/4. Catalyzes the conversion of GTP to 2,5-diamino-6-ribosylamino-4(3H)-pyrimidinone 5'-phosphate (DARP), formate and pyrophosphate. This is GTP cyclohydrolase-2 from Escherichia fergusonii (strain ATCC 35469 / DSM 13698 / CCUG 18766 / IAM 14443 / JCM 21226 / LMG 7866 / NBRC 102419 / NCTC 12128 / CDC 0568-73).